The following is a 129-amino-acid chain: M-zodatoxin-Lt8i (129 aa).

The N-terminal stretch at 1-20 is a signal peptide; the sequence is MKYFVVALALVAAFACIAES. Residues 21 to 60 constitute a propeptide that is removed on maturation; the sequence is KPAESEHELAEVEEENELADLEDAVWLEHLADLSDLEEAR.

This sequence belongs to the cationic peptide 06 (cytoinsectotoxin) family. In terms of tissue distribution, expressed by the venom gland.

It is found in the secreted. Insecticidal, cytolytic and antimicrobial peptide. Forms voltage-dependent, ion-permeable channels in membranes. At high concentration causes cell membrane lysis. The sequence is that of M-zodatoxin-Lt8i (cit 1-6) from Lachesana tarabaevi (Spider).